The primary structure comprises 286 residues: Probable transport system permease protein NifC (286 aa).

A run of 6 helical transmembrane segments spans residues 34–54, 75–95, 114–134, 152–172, 216–236, and 257–277; these read LFLA…ISMI, IILS…IGTP, IFVE…LLLA, VIFT…ALYV, GLIL…MFAG, and IKMA…LLLL. The region spanning 75–278 is the ABC transmembrane type-1 domain; it reads IILSFVTSLI…IMTFVLLLLV (204 aa).

The protein belongs to the binding-protein-dependent transport system permease family. CysTW subfamily.

The protein localises to the cell membrane. In terms of biological role, may be involved in molybdenum transport. In Clostridium pasteurianum, this protein is Probable transport system permease protein NifC (nifC).